The sequence spans 548 residues: Chaperonin GroEL (548 aa).

Residues 30 to 33 (TLGP), Lys51, 87 to 91 (DGTTT), Gly415, 479 to 481 (NAA), and Asp495 each bind ATP.

It belongs to the chaperonin (HSP60) family. Forms a cylinder of 14 subunits composed of two heptameric rings stacked back-to-back. Interacts with the co-chaperonin GroES.

The protein resides in the cytoplasm. It catalyses the reaction ATP + H2O + a folded polypeptide = ADP + phosphate + an unfolded polypeptide.. Functionally, together with its co-chaperonin GroES, plays an essential role in assisting protein folding. The GroEL-GroES system forms a nano-cage that allows encapsulation of the non-native substrate proteins and provides a physical environment optimized to promote and accelerate protein folding. The chain is Chaperonin GroEL from Vibrio campbellii (strain ATCC BAA-1116).